Consider the following 96-residue polypeptide: Putative septation protein SpoVG (96 aa).

Belongs to the SpoVG family.

Its function is as follows. Could be involved in septation. This is Putative septation protein SpoVG from Phytoplasma australiense.